We begin with the raw amino-acid sequence, 413 residues long: Serine hydroxymethyltransferase (413 aa).

(6S)-5,6,7,8-tetrahydrofolate is bound by residues leucine 116 and 120–122 (GHL). Lysine 225 carries the N6-(pyridoxal phosphate)lysine modification. 349-351 (SPF) contacts (6S)-5,6,7,8-tetrahydrofolate.

Belongs to the SHMT family. Homodimer. Pyridoxal 5'-phosphate serves as cofactor.

It localises to the cytoplasm. The enzyme catalyses (6R)-5,10-methylene-5,6,7,8-tetrahydrofolate + glycine + H2O = (6S)-5,6,7,8-tetrahydrofolate + L-serine. Its pathway is one-carbon metabolism; tetrahydrofolate interconversion. The protein operates within amino-acid biosynthesis; glycine biosynthesis; glycine from L-serine: step 1/1. Its function is as follows. Catalyzes the reversible interconversion of serine and glycine with tetrahydrofolate (THF) serving as the one-carbon carrier. This reaction serves as the major source of one-carbon groups required for the biosynthesis of purines, thymidylate, methionine, and other important biomolecules. Also exhibits THF-independent aldolase activity toward beta-hydroxyamino acids, producing glycine and aldehydes, via a retro-aldol mechanism. In Levilactobacillus brevis (strain ATCC 367 / BCRC 12310 / CIP 105137 / JCM 1170 / LMG 11437 / NCIMB 947 / NCTC 947) (Lactobacillus brevis), this protein is Serine hydroxymethyltransferase.